Here is a 327-residue protein sequence, read N- to C-terminus: BTB/POZ domain-containing protein KCTD12 (327 aa).

Residues 1–28 are disordered; it reads MALADSARGLPNGGGGGGGSGSSSSSAE. Residue alanine 2 is modified to N-acetylalanine. Positions 11–21 are enriched in gly residues; the sequence is PNGGGGGGGSG. At tyrosine 119 the chain carries Phosphotyrosine. Residues 129-204 form a disordered region; that stretch reads LGAPQQPGPG…PLLTPSQSLD (76 aa). Residues serine 153, serine 173, and serine 187 each carry the phosphoserine modification. Threonine 198 is subject to Phosphothreonine. A Phosphoserine modification is found at serine 202.

Interacts as a tetramer with GABBR1 and GABBR2. Expressed in the brain, mainly in the hippocampus and cerebellum.

The protein resides in the presynaptic cell membrane. It localises to the postsynaptic cell membrane. Auxiliary subunit of GABA-B receptors that determine the pharmacology and kinetics of the receptor response. Increases agonist potency and markedly alter the G-protein signaling of the receptors by accelerating onset and promoting desensitization. The protein is BTB/POZ domain-containing protein KCTD12 (Kctd12) of Mus musculus (Mouse).